The sequence spans 201 residues: Dimethylsulfoniopropionate lyase DddQ (201 aa).

Residues histidine 130, glutamate 134, tyrosine 136, and histidine 169 each coordinate a divalent metal cation.

It belongs to the non-heme iron-dependent dioxygenase family. Homodimer. It depends on a divalent metal cation as a cofactor.

The enzyme catalyses S,S-dimethyl-beta-propiothetin = acrylate + dimethyl sulfide + H(+). Functionally, may act as a dimethylsulfoniopropionate (DMSP) in vitro, releasing dimethyl sulfide (DMS). DMS is the principal form by which sulfur is transported from oceans to the atmosphere. The real activity of the protein is however subject to debate and it is unclear whether it constitutes a real dimethylsulfoniopropionate lyase in vivo. The sequence is that of Dimethylsulfoniopropionate lyase DddQ from Ruegeria pomeroyi (strain ATCC 700808 / DSM 15171 / DSS-3) (Silicibacter pomeroyi).